The chain runs to 859 residues: DNA-directed RNA polymerase subunit Rpo1C (859 aa).

Belongs to the RNA polymerase beta' chain family. As to quaternary structure, part of the RNA polymerase complex. In terms of processing, this protein undergoes a protein self splicing that involves a post-translational excision of the intervening region (intein) followed by peptide ligation.

Its subcellular location is the cytoplasm. It carries out the reaction RNA(n) + a ribonucleoside 5'-triphosphate = RNA(n+1) + diphosphate. DNA-dependent RNA polymerase (RNAP) catalyzes the transcription of DNA into RNA using the four ribonucleoside triphosphates as substrates. Forms part of the jaw domain. This chain is DNA-directed RNA polymerase subunit Rpo1C, found in Methanocaldococcus jannaschii (strain ATCC 43067 / DSM 2661 / JAL-1 / JCM 10045 / NBRC 100440) (Methanococcus jannaschii).